The chain runs to 342 residues: Pre-mRNA-splicing factor 18 (342 aa).

Met1 carries the N-acetylmethionine modification.

Belongs to the PRP18 family. Heterodimer with PPIH. Interacts with PRPF4 and with the spliceosome. Part of a complex containing U4/U6 snRNPs. Also detected in the cytoplasm. In terms of tissue distribution, detected in brain, heart, liver and skeletal muscle.

The protein localises to the nucleus speckle. Participates in the second step of pre-mRNA splicing. Down-regulates the expression of potassium channel subunits. This Rattus norvegicus (Rat) protein is Pre-mRNA-splicing factor 18 (Prpf18).